We begin with the raw amino-acid sequence, 205 residues long: MGGKWSKSSVVGWPAVRERMRRAEPAADGVGAVSRDLEKHGAITSSNTAATNADCAWLEAQEEEEVGFPVTPQVPLRPMTYKAAVDLSHFLKEKGGLEGLIHSQRRQDILDLWIHHTQGYFPDWQNYTPGPGVRYPLTFGWCYKLVPVEPEKEEANKGENTSLLHPVSLHGMDDPEREVLEWRFDSRLAFHHMARELHPEYFKNC.

Gly-2 carries N-myristoyl glycine; by host lipidation. Ser-6 is modified (phosphoserine; by host). Residues Glu-62–Glu-65 form an acidic; interacts with host PACS1 and PACS2; stabilizes the interaction of NEF/MHC-I with host AP1M1; necessary for MHC-I internalization region. Residues Pro-69–Pro-78 form an SH3-binding; interaction with Src family tyrosine kinases region. The PxxP; stabilizes the interaction of NEF/MHC-I with host AP1M1; necessary for MHC-I internalization motif lies at Pro-72–Pro-75. Residues Asp-108–Trp-124 are mediates dimerization, Nef-PTE1 interaction. Positions Val-148–Val-179 are binding to ATP6V1H. Positions Leu-163–Leu-164 match the Dileucine internalization motif; necessary for CD4 internalization motif. The Diacidic; necessary for CD4 internalization signature appears at Asp-173–Asp-174.

The protein belongs to the lentivirus primate group Nef protein family. As to quaternary structure, monomer; cytosolic form. Homodimer; membrane bound form. Interacts with Nef associated p21-activated kinase (PAK2); this interaction activates PAK2. Associates with the Nef-MHC-I-AP1 complex; this complex is required for MHC-I internalization. Interacts (via C-terminus) with host PI3-kinase. Interacts with host PACS1; this interaction seems to be weak. Interacts with host PACS2. Interacts with host LCK and MAPK3; these interactions inhibit the kinase activity of the latter. Interacts with host ATP6V1H; this interaction may play a role in CD4 endocytosis. Associates with the CD4-Nef-AP2 complex; this complex is required for CD4 internalization. Interacts with host AP2 subunit alpha and AP2 subunit sigma2. Interacts with TCR-zeta chain; this interaction up-regulates the Fas ligand (FasL) surface expression. Interacts with host HCK, LYN, and SRC; these interactions activate the Src family kinases. Interacts with MAP3K5; this interaction inhibits the Fas and TNFR-mediated death signals. Interacts with beta-COP and PTE1. Interacts with human RACK1; this increases Nef phosphorylation by PKC. Interacts with TP53; this interaction decreases the half-life of TP53, protecting the infected cell against p53-mediated apoptosis. Post-translationally, the virion-associated Nef proteins are cleaved by the viral protease to release the soluble C-terminal core protein. Nef is probably cleaved concomitantly with viral structural proteins on maturation of virus particles. Myristoylated. In terms of processing, phosphorylated on serine residues, probably by host PKCdelta and theta.

The protein localises to the host cell membrane. The protein resides in the virion. It is found in the secreted. Its subcellular location is the host Golgi apparatus membrane. Its function is as follows. Factor of infectivity and pathogenicity, required for optimal virus replication. Alters numerous pathways of T-lymphocyte function and down-regulates immunity surface molecules in order to evade host defense and increase viral infectivity. Alters the functionality of other immunity cells, like dendritic cells, monocytes/macrophages and NK cells. In infected CD4(+) T-lymphocytes, down-regulates the surface MHC-I, mature MHC-II, CD4, CD28, CCR5 and CXCR4 molecules. Mediates internalization and degradation of host CD4 through the interaction of with the cytoplasmic tail of CD4, the recruitment of AP-2 (clathrin adapter protein complex 2), internalization through clathrin coated pits, and subsequent transport to endosomes and lysosomes for degradation. Diverts host MHC-I molecules to the trans-Golgi network-associated endosomal compartments by an endocytic pathway to finally target them for degradation. MHC-I down-regulation may involve AP-1 (clathrin adapter protein complex 1) or possibly Src family kinase-ZAP70/Syk-PI3K cascade recruited by PACS2. In consequence infected cells are masked for immune recognition by cytotoxic T-lymphocytes. Decreasing the number of immune receptors also prevents reinfection by more HIV particles (superinfection). Down-regulates host SERINC3 and SERINC5 thereby excluding these proteins from the viral particles. Virion infectivity is drastically higher when SERINC3 or SERINC5 are excluded from the viral envelope, because these host antiviral proteins impair the membrane fusion event necessary for subsequent virion penetration. In terms of biological role, bypasses host T-cell signaling by inducing a transcriptional program nearly identical to that of anti-CD3 cell activation. Interaction with TCR-zeta chain up-regulates the Fas ligand (FasL). Increasing surface FasL molecules and decreasing surface MHC-I molecules on infected CD4(+) cells send attacking cytotoxic CD8+ T-lymphocytes into apoptosis. Functionally, plays a role in optimizing the host cell environment for viral replication without causing cell death by apoptosis. Protects the infected cells from apoptosis in order to keep them alive until the next virus generation is ready to strike. Inhibits the Fas and TNFR-mediated death signals by blocking MAP3K5/ASK1. Decreases the half-life of TP53, protecting the infected cell against p53-mediated apoptosis. Inhibits the apoptotic signals regulated by the Bcl-2 family proteins through the formation of a Nef/PI3-kinase/PAK2 complex that leads to activation of PAK2 and induces phosphorylation of host BAD. Its function is as follows. Extracellular Nef protein targets CD4(+) T-lymphocytes for apoptosis by interacting with CXCR4 surface receptors. The chain is Protein Nef from Homo sapiens (Human).